The following is a 310-amino-acid chain: Fe-S cluster assembly protein dre2 (310 aa).

The segment at 1–130 (MSGRTLLLSP…KPDIEDMRAV (130 aa)) is N-terminal SAM-like domain. Residues 131-203 (PLRLGRKKHD…EDLLDGSELA (73 aa)) are linker. [2Fe-2S] cluster is bound by residues Cys-212, Cys-223, Cys-226, and Cys-228. The fe-S binding site A stretch occupies residues 212 to 228 (CRPKAGRRRRACKDCTC). [4Fe-4S] cluster-binding residues include Cys-273, Cys-276, Cys-284, and Cys-287. 2 consecutive short sequence motifs (cx2C motif) follow at residues 273–276 (CGNC) and 284–287 (CEGC). The fe-S binding site B stretch occupies residues 273-287 (CGNCSLGDAFRCEGC).

Belongs to the anamorsin family. In terms of assembly, monomer. Interacts with tah18. Interacts with mia40. It depends on [2Fe-2S] cluster as a cofactor. Requires [4Fe-4S] cluster as cofactor.

It localises to the cytoplasm. Its subcellular location is the mitochondrion intermembrane space. Its function is as follows. Component of the cytosolic iron-sulfur (Fe-S) protein assembly (CIA) machinery required for the maturation of extramitochondrial Fe-S proteins. Part of an electron transfer chain functioning in an early step of cytosolic Fe-S biogenesis, facilitating the de novo assembly of a [4Fe-4S] cluster on the scaffold complex cfd1-nbp35. Electrons are transferred to dre2 from NADPH via the FAD- and FMN-containing protein tah18. Tah18-dre2 are also required for the assembly of the diferric tyrosyl radical cofactor of ribonucleotide reductase (RNR), probably by providing electrons for reduction during radical cofactor maturation in the catalytic small subunit rnr2. The chain is Fe-S cluster assembly protein dre2 from Aspergillus clavatus (strain ATCC 1007 / CBS 513.65 / DSM 816 / NCTC 3887 / NRRL 1 / QM 1276 / 107).